The chain runs to 180 residues: Putative manganese efflux pump MntP (180 aa).

A run of 5 helical transmembrane segments spans residues Val-6–Leu-26, Met-33–Trp-53, Val-63–Val-83, Gly-101–Phe-121, and Leu-130–Val-150.

It belongs to the MntP (TC 9.B.29) family.

The protein localises to the cell membrane. Probably functions as a manganese efflux pump. The protein is Putative manganese efflux pump MntP of Desulforudis audaxviator (strain MP104C).